Reading from the N-terminus, the 338-residue chain is mRNA decay activator protein ZFP36L1 (338 aa).

The segment at 1–111 (MTTTLVSATI…QKQPGSGQVN (111 aa)) is necessary and sufficient for the association with mRNA decay enzymes and mRNA decay activation. Position 54 is a phosphoserine; by MAPKAPK2 (S54). The tract at residues 71–113 (LKGEPAPSLSSRDSRFRDRSFSEGGERLLPTQKQPGSGQVNSS) is disordered. Over residues 82-96 (RDSRFRDRSFSEGGE) the composition is skewed to basic and acidic residues. S90 is modified (phosphoserine; by PKB/AKT1). Residue S92 is modified to Phosphoserine; by PKB/AKT1 and MAPKAPK2. The span at 101–113 (TQKQPGSGQVNSS) shows a compositional bias: polar residues. C3H1-type zinc fingers lie at residues 114 to 142 (RYKTELCRPFEENGACKYGDKCQFAHGIH) and 152 to 180 (KYKTELCRTFHTIGFCPYGPRCHFIHNAE). The interval 185 to 338 (LAGGRDLSAD…IFSRLSISDD (154 aa)) is necessary for mRNA decay activation. The residue at position 203 (S203) is a Phosphoserine; by PKB/AKT1 and MAPKAPK2. Residues 273-338 (SPTTFLFRPM…IFSRLSISDD (66 aa)) form a disordered region. The span at 305-318 (YLSSSSSSHSGSDS) shows a compositional bias: low complexity. The residue at position 318 (S318) is a Phosphoserine. S334 carries the phosphoserine; by RPS6KA1 modification.

In terms of assembly, associates with the cytoplasmic CCR4-NOT deadenylase and RNA exosome complexes to trigger ARE-containing mRNA deadenylation and decay processes. Interacts with CNOT1. Interacts (via N-terminus) with CNOT6. Interacts with CNOT7; this interaction is inhibited in response to phorbol 12-myristate 13-acetate (PMA) treatment in a p38 MAPK-dependent manner. Interacts with DCP1A. Interacts (via N-terminus) with DCP2. Interacts (via N-terminus) with EXOSC2. Interacts with XRN1. Interacts (via phosphorylated form) with YWHAB; this interaction occurs in a protein kinase AKT1-dependent manner. Interacts (via phosphorylated form) with YWHAZ; this interaction occurs in a p38 MAPK- and AKT-signaling pathways. Post-translationally, phosphorylated. Phosphorylated by RPS6KA1 at Ser-334 upon phorbol 12-myristate 13-acetate (PMA) treatment; this phosphorylation results in dissociation of the CCR4-NOT deadenylase complex and induces p38 MAPK-mediated stabilization of the low-density lipoprotein receptor LDLR mRNA. Phosphorylated by protein kinase AKT1 at Ser-92 and Ser-203 in response to insulin; these phosphorylations stabilize ZFP36L1, increase the association with 14-3-3 proteins and mediate ARE-containing mRNA stabilization. AKT1-mediated phosphorylation at Ser-92 does not impair ARE-containing RNA-binding. Phosphorylated at Ser-54, Ser-92 and Ser-203 by MAPKAPK2; these phosphorylations increase the association with 14-3-3 proteins and mediate ARE-containing mRNA stabilization in a protein kinase AKT1-independent manner. MAPKAPK2-mediated phosphorylations at Ser-54, Ser-92 and Ser-203 do not impair ARE-containing RNA-binding. Phosphorylations increase the association with 14-3-3 proteins and mediate ARE-containing mRNA stabilization during early adipogenesis in a p38 MAPK- and AKT-dependent manner. Ubiquitinated. Ubiquitination leads to proteasomal degradation, a process inhibited by phosphorylations at Ser-90, Ser-92 and Ser-203. As to expression, expressed in preadipocytes and adipocytes. Expressed in the proximal and distal tubules in the renal cortex (at protein level). Expressed in ovary, heart, kidney, lung, spleen and thymus. Weakly expressed in brain, liver and testis. Expressed in osteoblasts. Expressed in embryonic stem cells (ESCs). Expressed through B lymphocyte development.

It is found in the nucleus. Its subcellular location is the cytoplasm. The protein resides in the cytoplasmic granule. It localises to the P-body. Functionally, zinc-finger RNA-binding protein that destabilizes several cytoplasmic AU-rich element (ARE)-containing mRNA transcripts by promoting their poly(A) tail removal or deadenylation, and hence provide a mechanism for attenuating protein synthesis. Acts as a 3'-untranslated region (UTR) ARE mRNA-binding adapter protein to communicate signaling events to the mRNA decay machinery. Functions by recruiting the CCR4-NOT deadenylating complex and components of the cytoplasmic RNA decay machinery to the bound ARE-containing mRNAs, and hence promotes ARE-mediated mRNA deadenylation and decay processes. Also induces the degradation of ARE-containing mRNAs even in absence of poly(A) tail. Binds to 3'-UTR ARE of numerous mRNAs. Positively regulates early adipogenesis by promoting ARE-mediated mRNA decay of immediate early genes (IEGs). Promotes ARE-mediated mRNA decay of mineralocorticoid receptor NR3C2 mRNA in response to hypertonic stress. Negatively regulates hematopoietic/erythroid cell differentiation by promoting ARE-mediated mRNA decay of the transcription factor STAT5B mRNA. Positively regulates monocyte/macrophage cell differentiation by promoting ARE-mediated mRNA decay of the cyclin-dependent kinase CDK6 mRNA. Promotes degradation of ARE-containing pluripotency-associated mRNAs in embryonic stem cells (ESCs), such as NANOG, through a fibroblast growth factor (FGF)-induced MAPK-dependent signaling pathway, and hence attenuates ESC self-renewal and positively regulates mesendoderm differentiation. May play a role in mediating pro-apoptotic effects in malignant B-cells by promoting ARE-mediated mRNA decay of BCL2 mRNA. In association with ZFP36L2 maintains quiescence on developing B lymphocytes by promoting ARE-mediated decay of several mRNAs encoding cell cycle regulators that help B cells progress through the cell cycle, and hence ensuring accurate variable-diversity-joining (VDJ) recombination and functional immune cell formation. Together with ZFP36L2 is also necessary for thymocyte development and prevention of T-cell acute lymphoblastic leukemia (T-ALL) transformation by promoting ARE-mediated mRNA decay of the oncogenic transcription factor NOTCH1 mRNA. Involved in the delivery of target ARE-mRNAs to processing bodies (PBs). In addition to its cytosolic mRNA-decay function, plays a role in the regulation of nuclear mRNA 3'-end processing; modulates mRNA 3'-end maturation efficiency of the DLL4 mRNA through binding with an ARE embedded in a weak noncanonical polyadenylation (poly(A)) signal in endothelial cells. Also involved in the regulation of stress granule (SG) and P-body (PB) formation and fusion. Plays a role in vasculogenesis and endocardial development. Involved in the regulation of keratinocyte proliferation, differentiation and apoptosis. Plays a role in myoblast cell differentiation. In Mus musculus (Mouse), this protein is mRNA decay activator protein ZFP36L1.